A 224-amino-acid chain; its full sequence is Glutathione S-transferase U28 (224 aa).

Residues 6–85 (SKVVVLDFWA…YIDETWTDAA (80 aa)) enclose the GST N-terminal domain. Glutathione-binding positions include 16–17 (SP), 42–43 (NK), 56–57 (KV), and 69–70 (ES). The region spanning 91–217 (DPQSRATARF…EKVYQQVLKL (127 aa)) is the GST C-terminal domain. Residue T154 is modified to Phosphothreonine.

It belongs to the GST superfamily. Tau family.

It is found in the cytoplasm. The protein resides in the cytosol. The enzyme catalyses RX + glutathione = an S-substituted glutathione + a halide anion + H(+). Its function is as follows. May be involved in the conjugation of reduced glutathione to a wide number of exogenous and endogenous hydrophobic electrophiles and have a detoxification role against certain herbicides. This is Glutathione S-transferase U28 (GSTU28) from Arabidopsis thaliana (Mouse-ear cress).